We begin with the raw amino-acid sequence, 4652 residues long: Low-density lipoprotein receptor-related protein 2 (4652 aa).

The N-terminal stretch at 1–25 is a signal peptide; sequence MERWAAAAACTLLLAFAACLAPASG. The Extracellular portion of the chain corresponds to 26-4422; that stretch reads RECLGNEFRC…SKGISPGTTV (4397 aa). 7 consecutive LDL-receptor class A domains span residues 27-63, 66-104, 108-144, 142-181, 183-219, 223-259, and 267-308; these read ECLG…IGCP, TCGS…QRCP, TCSS…INCR, NCRY…LNCT, RCLR…HSCS, PCKG…DGCE, and ECYP…RVCD. 21 disulfides stabilise this stretch: cysteine 28/cysteine 40, cysteine 35/cysteine 53, cysteine 47/cysteine 62, cysteine 67/cysteine 80, cysteine 74/cysteine 93, cysteine 87/cysteine 103, cysteine 109/cysteine 121, cysteine 116/cysteine 134, cysteine 128/cysteine 143, cysteine 143/cysteine 158, cysteine 153/cysteine 171, cysteine 165/cysteine 180, cysteine 184/cysteine 196, cysteine 191/cysteine 209, cysteine 203/cysteine 218, cysteine 224/cysteine 236, cysteine 231/cysteine 249, cysteine 243/cysteine 258, cysteine 268/cysteine 281, cysteine 275/cysteine 294, and cysteine 288/cysteine 307. N-linked (GlcNAc...) asparagine glycosylation is found at asparagine 160 and asparagine 179. An N-linked (GlcNAc...) asparagine glycan is attached at asparagine 341. Residues 348–386 form the EGF-like 1; calcium-binding domain; sequence DFNDCQIWGICDHFCEDRIGHHQCFCAEGYVLEHEQHCR. Intrachain disulfides connect cysteine 352-cysteine 362, cysteine 358-cysteine 371, and cysteine 373-cysteine 385. Asparagine 388 carries N-linked (GlcNAc...) asparagine glycosylation. LDL-receptor class B repeat units follow at residues 436 to 478, 479 to 521, 522 to 568, 569 to 613, 753 to 795, 796 to 837, 838 to 881, and 882 to 925; these read SKVF…DWIN, NKLY…DPTV, GYLF…DLVA, KRVY…FEDN, NAIF…DWIS, RNLY…HPIA, GYIF…DWGS, and SRLY…FGEY. The N-linked (GlcNAc...) asparagine glycan is linked to asparagine 771. N-linked (GlcNAc...) asparagine glycosylation occurs at asparagine 866. An N-linked (GlcNAc...) asparagine glycan is attached at asparagine 1015. The LDL-receptor class A 8 domain maps to 1025–1061; that stretch reads QCGALSFPCNNGRCVPLHYRCDGVDDCHDNSDEVQCG. Disulfide bonds link cysteine 1026–cysteine 1038, cysteine 1033–cysteine 1051, and cysteine 1045–cysteine 1060. A glycan (N-linked (GlcNAc...) asparagine) is linked at asparagine 1064. 7 consecutive LDL-receptor class A domains span residues 1066–1104, 1110–1146, 1150–1186, 1188–1225, 1231–1269, 1272–1308, and 1313–1351; these read SCAP…QNCS, SCRA…KRCD, TCSP…SACV, NCTD…IDCP, MCRQ…SGCP, TCPX…KDCP, and LCPS…PLCN. 9 disulfides stabilise this stretch: cysteine 1067–cysteine 1081, cysteine 1074–cysteine 1094, cysteine 1088–cysteine 1103, cysteine 1111–cysteine 1123, cysteine 1118–cysteine 1136, cysteine 1130–cysteine 1145, cysteine 1151–cysteine 1163, cysteine 1158–cysteine 1176, and cysteine 1170–cysteine 1185. Residue asparagine 1102 is glycosylated (N-linked (GlcNAc...) asparagine). The Ca(2+) site is built by tryptophan 1128, aspartate 1131, aspartate 1133, aspartate 1135, aspartate 1141, and glutamate 1142. Asparagine 1188 is a glycosylation site (N-linked (GlcNAc...) asparagine). 12 cysteine pairs are disulfide-bonded: cysteine 1189-cysteine 1202, cysteine 1196-cysteine 1215, cysteine 1209-cysteine 1224, cysteine 1232-cysteine 1245, cysteine 1239-cysteine 1258, cysteine 1252-cysteine 1268, cysteine 1273-cysteine 1285, cysteine 1280-cysteine 1298, cysteine 1292-cysteine 1307, cysteine 1314-cysteine 1327, cysteine 1321-cysteine 1340, and cysteine 1334-cysteine 1350. Ca(2+)-binding residues include tyrosine 1207, aspartate 1210, valine 1212, aspartate 1214, aspartate 1220, and glutamate 1221. N-linked (GlcNAc...) asparagine glycosylation is present at asparagine 1329. N-linked (GlcNAc...) asparagine glycans are attached at residues asparagine 1385, asparagine 1452, asparagine 1498, and asparagine 1552. LDL-receptor class B repeat units lie at residues 1480–1522, 1523–1565, 1568–1611, 1612–1654, 1655–1696, 1789–1831, 1832–1881, 1882–1929, 1930–1971, and 1972–2012; these read GRIF…DWVG, RNLY…DPRV, RVIF…DYPT, RLLY…TIFE, DSIY…VHPA, QFLY…DWLS, RNLY…DPAK, GKLY…DIQE, QKLY…YGPY, and LYYA…YRRR. Residues asparagine 1677 and asparagine 1809 are each glycosylated (N-linked (GlcNAc...) asparagine). Asparagine 2053 carries an N-linked (GlcNAc...) asparagine glycan. LDL-receptor class B repeat units lie at residues 2105–2154, 2155–2199, 2200–2243, 2244–2287, 2429–2475, 2476–2516, 2517–2560, 2561–2602, and 2603–2644; these read GFVY…DWVA, GNLY…DPKN, RYLF…DHNS, GYIY…FGNS, NRIY…DWIG, RRIY…DPCQ, GYMY…DYKE, NLLY…YGQY, and IYWT…VVNN. N-linked (GlcNAc...) asparagine glycosylation is found at asparagine 2175 and asparagine 2222. Asparagine 2485 is a glycosylation site (N-linked (GlcNAc...) asparagine). LDL-receptor class A domains follow at residues 2696-2734, 2737-2773, 2776-2815, 2818-2857, 2860-2897, 2902-2941, 2944-2986, 2989-3025, 3028-3066, and 3071-3107; these read RCNS…TLCA, TCPP…SGCR, SCNI…KNCA, TCLP…IYCV, TCKN…ATCV, TCSS…HHCE, NCSS…QNCT, NCSG…RNCK, ACDE…HLCH, and TCPP…ERCG. Disulfide bonds link cysteine 2697-cysteine 2709, cysteine 2704-cysteine 2722, cysteine 2716-cysteine 2733, cysteine 2738-cysteine 2750, cysteine 2745-cysteine 2763, cysteine 2757-cysteine 2772, cysteine 2777-cysteine 2790, cysteine 2785-cysteine 2803, cysteine 2797-cysteine 2814, cysteine 2819-cysteine 2832, cysteine 2826-cysteine 2845, cysteine 2839-cysteine 2856, cysteine 2861-cysteine 2873, cysteine 2868-cysteine 2886, cysteine 2880-cysteine 2896, cysteine 2903-cysteine 2915, cysteine 2910-cysteine 2928, and cysteine 2922-cysteine 2940. Asparagine 2698 is a glycosylation site (N-linked (GlcNAc...) asparagine). The N-linked (GlcNAc...) asparagine glycan is linked to asparagine 2778. 2 N-linked (GlcNAc...) asparagine glycosylation sites follow: asparagine 2806 and asparagine 2807. Asparagine 2944 is a glycosylation site (N-linked (GlcNAc...) asparagine). Disulfide bonds link cysteine 2945/cysteine 2962, cysteine 2952/cysteine 2975, and cysteine 2969/cysteine 2985. N-linked (GlcNAc...) asparagine glycosylation is found at asparagine 2984 and asparagine 2989. Intrachain disulfides connect cysteine 2990–cysteine 3002, cysteine 2997–cysteine 3015, cysteine 3009–cysteine 3024, cysteine 3029–cysteine 3041, cysteine 3036–cysteine 3054, cysteine 3048–cysteine 3065, cysteine 3072–cysteine 3084, cysteine 3079–cysteine 3097, and cysteine 3091–cysteine 3106. The N-linked (GlcNAc...) asparagine glycan is linked to asparagine 3122. An EGF-like 2; calcium-binding domain is found at 3149 to 3189; that stretch reads DIDECKETPSVCSQKCENLLGSYICKCAPGYTREPDGRSCR. Disulfide bonds link cysteine 3153/cysteine 3164, cysteine 3160/cysteine 3173, and cysteine 3175/cysteine 3188. N-linked (GlcNAc...) asparagine glycans are attached at residues asparagine 3208, asparagine 3254, asparagine 3312, and asparagine 3352. 5 LDL-receptor class B repeats span residues 3236–3278, 3279–3321, 3330–3373, 3374–3417, and 3418–3458; these read ERLY…DWVT, RKLY…DKPR, GYVY…DYTN, DLLY…FEDT, and IYWT…YHPY. N-linked (GlcNAc...) asparagine glycans are attached at residues asparagine 3435 and asparagine 3444. LDL-receptor class A domains are found at residues 3509-3547, 3550-3588, 3591-3629, 3632-3670, 3675-3713, 3716-3753, 3756-3792, 3795-3831, and 3839-3877; these read MCSS…NTCP, FCRL…VLCE, RCES…SHCA, TCLP…QECM, RCDN…QNCE, TCKP…ENCV, QCSE…RDCE, TCHP…ATCP, and YCPA…HLCL. Disulfide bonds link cysteine 3510-cysteine 3523, cysteine 3517-cysteine 3536, cysteine 3530-cysteine 3546, cysteine 3551-cysteine 3563, cysteine 3558-cysteine 3576, cysteine 3570-cysteine 3587, cysteine 3592-cysteine 3604, cysteine 3599-cysteine 3617, cysteine 3611-cysteine 3628, cysteine 3633-cysteine 3645, cysteine 3640-cysteine 3658, cysteine 3652-cysteine 3669, cysteine 3676-cysteine 3690, cysteine 3684-cysteine 3703, cysteine 3697-cysteine 3712, cysteine 3717-cysteine 3730, cysteine 3725-cysteine 3743, cysteine 3737-cysteine 3752, cysteine 3757-cysteine 3769, cysteine 3764-cysteine 3782, cysteine 3776-cysteine 3791, cysteine 3796-cysteine 3808, cysteine 3803-cysteine 3821, cysteine 3815-cysteine 3830, cysteine 3840-cysteine 3852, cysteine 3847-cysteine 3865, and cysteine 3859-cysteine 3876. Residue asparagine 3562 is glycosylated (N-linked (GlcNAc...) asparagine). A glycan (N-linked (GlcNAc...) asparagine) is linked at asparagine 3678. Residue asparagine 3878 is glycosylated (N-linked (GlcNAc...) asparagine). LDL-receptor class A domains are found at residues 3880-3919 and 3925-3961; these read TCDL…ENCL and PCTE…TGCN. Intrachain disulfides connect cysteine 3881–cysteine 3894, cysteine 3889–cysteine 3907, cysteine 3901–cysteine 3918, cysteine 3926–cysteine 3938, cysteine 3933–cysteine 3951, cysteine 3945–cysteine 3960, cysteine 3968–cysteine 3977, cysteine 3973–cysteine 3987, cysteine 3989–cysteine 4003, cysteine 4009–cysteine 4019, cysteine 4015–cysteine 4028, and cysteine 4030–cysteine 4045. In terms of domain architecture, EGF-like 3 spans 3964–4004; that stretch reads EERSCAENLCEHNCTQLIGGGFICSCRPGFKASSLNRNSCE. N-linked (GlcNAc...) asparagine glycosylation is present at asparagine 3976. The EGF-like 4; calcium-binding domain maps to 4005 to 4046; sequence DINECEQFGVCPQNCHNTKGSYECTCAEGFRSMSEHYGERCA. An N-linked (GlcNAc...) asparagine glycan is attached at asparagine 4066. 3 LDL-receptor class B repeats span residues 4152–4194, 4195–4238, and 4240–4281; these read RHIY…NPKQ, GLMY…DYVN, and DRIY…FESQ. N-linked (GlcNAc...) asparagine glycosylation occurs at asparagine 4325. One can recognise an EGF-like 5 domain in the interval 4375-4409; the sequence is MPPPCRCMNEGNCYFDKNNLPKCKCPSGYMGEYCE. 3 disulfide bridges follow: cysteine 4379–cysteine 4387, cysteine 4381–cysteine 4397, and cysteine 4399–cysteine 4408. The chain crosses the membrane as a helical span at residues 4423-4443; that stretch reads AVLVTLILIIIIGGLVALGFF. The Cytoplasmic portion of the chain corresponds to 4444-4652; the sequence is HYRKTGSILI…ANLVREDSEA (209 aa). The SH3-binding motif lies at 4450–4459; that stretch reads SILISMPRLP. The PxLPxI/L motif 1; mediates interaction with ANKRA2 motif lies at 4453 to 4458; the sequence is ISMPRL. The short motif at 4456 to 4461 is the PxLPxI/L motif 2; mediates interaction with ANKRA2 element; that stretch reads PRLPSL. Serine 4460 bears the Phosphoserine mark. The Endocytosis signal signature appears at 4518–4523; the sequence is FENPMY. A compositionally biased stretch (polar residues) spans 4536–4553; the sequence is TTTQVSESGNVYNKNYGS. The disordered stretch occupies residues 4536–4652; that stretch reads TTTQVSESGN…ANLVREDSEA (117 aa). At serine 4568 the chain carries Phosphoserine. The interaction with DAB2 stretch occupies residues 4588 to 4601; that stretch reads QNTNFENPIYAETE. Residues 4594–4597 carry the NPXY motif motif; the sequence is NPIY. An SH2-binding motif is present at residues 4597 to 4600; sequence YAET. Positions 4610–4621 match the SH3-binding motif; that stretch reads VTPPPSPSPPAK. Serine 4615 is subject to Phosphoserine. The span at 4626 to 4636 shows a compositional bias: polar residues; that stretch reads KGTTPAYSATE. A Phosphothreonine modification is found at threonine 4629. Serine 4650 bears the Phosphoserine mark.

Belongs to the LDLR family. Binds plasminogen, extracellular matrix components, plasminogen activator-plasminogen activator inhibitor type I complex, apolipoprotein E-enriched beta-VLDL, lipoprotein lipase, lactoferrin, CLU/clusterin and calcium. Forms a multimeric complex together with LRPAP1. Interacts (via PxLPxI/L motif) with ANKRA2 (via ankyrin repeats). Interacts with LRP2BP. Interacts (via NPXY motif) with DAB2; the interaction is not affected by tyrosine phosphorylation of the NPXY motif. Interacts with MB. Interacts with BMP4. Interacts with the Sonic hedgehog protein N-product which is the active product of SHH. Interacts with CST3 in a calcium-dependent manner. Interacts with the vitamin-D binding protein GC/DBP. Interacts with sex hormone-binding protein SHBG. Interacts with angiotensin-2. Also interacts with angiotensin 1-7. Interacts with APOM. Interacts with selenoprotein SEPP1. Interacts with LEP. Interacts with ALB. Interacts with the antiapoptotic protein BIRC5/survivin. Interacts with matrix metalloproteinase MMP2 in complex with metalloproteinase inhibitor TIMP1. In neurons, forms a trimeric complex with APP and APPB1/FE65. Interacts with LDLRAP1/ARH; mediates trafficking of LRP2 to the endocytic recycling compartment. Does not interact with beta-amyloid protein 40 alone but interacts with the complex composed of beta-amyloid protein 40 and CLU/APOJ. Interacts with MDK. In terms of processing, a fraction undergoes proteolytic cleavage of the extracellular domain at the cell membrane to generate a cytoplasmic tail fragment. This is internalized into the early endosome from where it trafficks in an LDLRAP1/ARH-dependent manner to the endocytic recycling compartment (ERC). In the ERC, it is further cleaved by gamma-secretase to release a fragment which translocates to the nucleus and mediates transcriptional repression. Post-translationally, N-glycosylation is required for ligand binding.

The protein resides in the apical cell membrane. It is found in the endosome lumen. It localises to the membrane. The protein localises to the clathrin-coated pit. Its subcellular location is the cell projection. The protein resides in the dendrite. It is found in the axon. Its function is as follows. Multiligand endocytic receptor. Acts together with CUBN to mediate endocytosis of high-density lipoproteins. Mediates receptor-mediated uptake of polybasic drugs such as aprotinin, aminoglycosides and polymyxin B. In the kidney, mediates the tubular uptake and clearance of leptin. Also mediates transport of leptin across the blood-brain barrier through endocytosis at the choroid plexus epithelium. Endocytosis of leptin in neuronal cells is required for hypothalamic leptin signaling and leptin-mediated regulation of feeding and body weight. Mediates endocytosis and subsequent lysosomal degradation of CST3 in kidney proximal tubule cells. Mediates renal uptake of 25-hydroxyvitamin D3 in complex with the vitamin D3 transporter GC/DBP. Mediates renal uptake of metallothionein-bound heavy metals. Together with CUBN, mediates renal reabsorption of myoglobin. Mediates renal uptake and subsequent lysosomal degradation of APOM. Plays a role in kidney selenium homeostasis by mediating renal endocytosis of selenoprotein SEPP1. Mediates renal uptake of the antiapoptotic protein BIRC5/survivin which may be important for functional integrity of the kidney. Mediates renal uptake of matrix metalloproteinase MMP2 in complex with metalloproteinase inhibitor TIMP1. Mediates endocytosis of Sonic hedgehog protein N-product (ShhN), the active product of SHH. Also mediates ShhN transcytosis. In the embryonic neuroepithelium, mediates endocytic uptake and degradation of BMP4, is required for correct SHH localization in the ventral neural tube and plays a role in patterning of the ventral telencephalon. Required at the onset of neurulation to sequester SHH on the apical surface of neuroepithelial cells of the rostral diencephalon ventral midline and to control PTCH1-dependent uptake and intracellular trafficking of SHH. During neurulation, required in neuroepithelial cells for uptake of folate bound to the folate receptor FOLR1 which is necessary for neural tube closure. In the adult brain, negatively regulates BMP signaling in the subependymal zone which enables neurogenesis to proceed. In astrocytes, mediates endocytosis of ALB which is required for the synthesis of the neurotrophic factor oleic acid. Involved in neurite branching. During optic nerve development, required for SHH-mediated migration and proliferation of oligodendrocyte precursor cells. Mediates endocytic uptake and clearance of SHH in the retinal margin which protects retinal progenitor cells from mitogenic stimuli and keeps them quiescent. Plays a role in reproductive organ development by mediating uptake in reproductive tissues of androgen and estrogen bound to the sex hormone binding protein SHBG. Mediates endocytosis of angiotensin-2. Also mediates endocytosis of angiotensis 1-7. Binds to the complex composed of beta-amyloid protein 40 and CLU/APOJ and mediates its endocytosis and lysosomal degradation. Required for embryonic heart development. Required for normal hearing, possibly through interaction with estrogen in the inner ear. The protein is Low-density lipoprotein receptor-related protein 2 of Sus scrofa (Pig).